A 375-amino-acid chain; its full sequence is Chaperone protein DnaJ (375 aa).

The J domain occupies 5–70 (DYYSLLEVER…QKRAAYDRYG (66 aa)). The segment at 135-213 (GKTVDIEIDV…CHGEGRCEKH (79 aa)) adopts a CR-type zinc-finger fold. Residues Cys-148, Cys-151, Cys-165, Cys-168, Cys-187, Cys-190, Cys-201, and Cys-204 each coordinate Zn(2+). CXXCXGXG motif repeat units follow at residues 148 to 155 (CDACHGSG), 165 to 172 (CDTCHGSG), 187 to 194 (CPVCQGKG), and 201 to 208 (CPECHGEG).

Belongs to the DnaJ family. In terms of assembly, homodimer. It depends on Zn(2+) as a cofactor.

Its subcellular location is the cytoplasm. Its function is as follows. Participates actively in the response to hyperosmotic and heat shock by preventing the aggregation of stress-denatured proteins and by disaggregating proteins, also in an autonomous, DnaK-independent fashion. Unfolded proteins bind initially to DnaJ; upon interaction with the DnaJ-bound protein, DnaK hydrolyzes its bound ATP, resulting in the formation of a stable complex. GrpE releases ADP from DnaK; ATP binding to DnaK triggers the release of the substrate protein, thus completing the reaction cycle. Several rounds of ATP-dependent interactions between DnaJ, DnaK and GrpE are required for fully efficient folding. Also involved, together with DnaK and GrpE, in the DNA replication of plasmids through activation of initiation proteins. The chain is Chaperone protein DnaJ from Zymomonas mobilis subsp. mobilis (strain ATCC 31821 / ZM4 / CP4).